A 392-amino-acid polypeptide reads, in one-letter code: Protein SRL2 (392 aa).

A Phosphoserine modification is found at serine 11. The tract at residues lysine 18–lysine 52 is disordered. Over residues glutamate 21 to glutamate 31 the composition is skewed to basic and acidic residues. Residues lysine 41 to threonine 50 are compositionally biased toward basic residues. Serine 139 carries the post-translational modification Phosphoserine. The tract at residues glutamate 284–lysine 303 is disordered. The span at threonine 287–isoleucine 296 shows a compositional bias: polar residues.

Its subcellular location is the cytoplasm. The protein localises to the nucleus. The chain is Protein SRL2 (SRL2) from Saccharomyces cerevisiae (strain ATCC 204508 / S288c) (Baker's yeast).